Consider the following 103-residue polypeptide: Small ribosomal subunit protein uS14c (103 aa).

Positions 26 to 56 are disordered; the sequence is SSKKKIRSKVSPLSLSEKTKMQEKLQSLPRN.

The protein belongs to the universal ribosomal protein uS14 family. In terms of assembly, part of the 30S ribosomal subunit.

Its subcellular location is the plastid. The protein localises to the chloroplast. In terms of biological role, binds 16S rRNA, required for the assembly of 30S particles. The chain is Small ribosomal subunit protein uS14c from Saccharum officinarum (Sugarcane).